A 270-amino-acid polypeptide reads, in one-letter code: MARYGVAVVKIGGSIASRLERVADEIAVLAREGLRLVVVHGGGKVVDEYSRRMGVEPRYVLHPSGVRSRYTSWEELEVYVMVMAGLLATSISSELASRGLKVLSLTGLDGLSVEARRRERIVIVNERGRPQAIPGGYTGKIERVDSMFVGSMLQQVDVILYSPVAYGREGDRVVALNVDGDQMAASLSAALKAPLALVTDVPGVILDGRVVDRIRVSEAREIAAKAGVGMNRKILMAAKAVSEGSPYAAIGDPPIQSLINGEKGTLVTRS.

Residues 42-43 (GG), Arg-69, and Asn-177 each bind substrate.

It belongs to the acetylglutamate kinase family. LysZ subfamily.

It localises to the cytoplasm. The enzyme catalyses [amino-group carrier protein]-C-terminal-N-(1,4-dicarboxybutan-1-yl)-L-glutamine + ATP = [amino-group carrier protein]-C-terminal-N-(1-carboxy-5-phosphooxy-5-oxopentan-1-yl)-L-glutamine + ADP. It carries out the reaction [amino-group carrier protein]-C-terminal-gamma-(L-glutamyl)-L-glutamate + ATP = [amino-group carrier protein]-C-terminal-gamma-(5-phospho-L-glutamyl)-L-glutamate + ADP. It functions in the pathway amino-acid biosynthesis; L-lysine biosynthesis via AAA pathway; L-lysine from L-alpha-aminoadipate (Thermus route): step 2/5. The protein operates within amino-acid biosynthesis; L-arginine biosynthesis. Involved in both the arginine and lysine biosynthetic pathways. Phosphorylates the LysW-bound precursors glutamate (for arginine biosynthesis), respectively alpha-aminoadipate (for lysine biosynthesis). This chain is Putative [LysW]-aminoadipate/[LysW]-glutamate kinase, found in Aeropyrum pernix (strain ATCC 700893 / DSM 11879 / JCM 9820 / NBRC 100138 / K1).